A 356-amino-acid chain; its full sequence is Glutenin, low molecular weight subunit (356 aa).

The first 19 residues, 1–19, serve as a signal peptide directing secretion; it reads MKTFLVFALLALAAASAVA. A disordered region spans residues 20–179; it reads QISQQQQAPP…LQQQRPPFSR (160 aa).

The protein belongs to the gliadin/glutenin family. In terms of assembly, disulfide-bridge linked aggregates.

Its function is as follows. Glutenins are high-molecular weight seed storage proteins of wheat endosperm. Thought to be responsible for the visco-elastic property of wheat dough. The chain is Glutenin, low molecular weight subunit from Triticum aestivum (Wheat).